A 396-amino-acid polypeptide reads, in one-letter code: Probable sugar efflux transporter (396 aa).

Residues Met1–Arg14 lie on the Cytoplasmic side of the membrane. Residues Val15 to Leu35 form a helical membrane-spanning segment. The Periplasmic portion of the chain corresponds to Leu36–Gln49. The chain crosses the membrane as a helical span at residues Val50–Leu70. Residues Met71 to Leu80 are Cytoplasmic-facing. A helical transmembrane segment spans residues Leu81–Phe101. Residue Thr102 is a topological domain, periplasmic. The helical transmembrane segment at Val103–Ala123 threads the bilayer. Residues Ser124 to Arg135 lie on the Cytoplasmic side of the membrane. Residues Ala136–Leu156 form a helical membrane-spanning segment. Over Gly157–Thr169 the chain is Periplasmic. Residues Phe170–Leu190 form a helical membrane-spanning segment. At Leu191–Arg208 the chain is on the cytoplasmic side. The chain crosses the membrane as a helical span at residues Pro209–Tyr229. The Periplasmic segment spans residues Ser230–Asn245. The helical transmembrane segment at Phe246–Gly266 threads the bilayer. Over Lys267 to Ser274 the chain is Cytoplasmic. The chain crosses the membrane as a helical span at residues Ala275–Ala295. Residues Asn296–Glu298 are Periplasmic-facing. The helical transmembrane segment at Ile299–Met319 threads the bilayer. Over Gln320–Asp332 the chain is Cytoplasmic. The helical transmembrane segment at Val333–Gly353 threads the bilayer. The Periplasmic segment spans residues Asn354 to Ser363. Residues Met364–Phe384 form a helical membrane-spanning segment. The Cytoplasmic portion of the chain corresponds to Arg385–Gln396.

The protein belongs to the major facilitator superfamily. SotB (TC 2.A.1.2) family.

It localises to the cell inner membrane. In terms of biological role, involved in the efflux of sugars. The physiological role may be the reduction of the intracellular concentration of toxic sugars or sugar metabolites. This Escherichia coli O157:H7 protein is Probable sugar efflux transporter.